We begin with the raw amino-acid sequence, 685 residues long: Probable transcriptional regulator SLK3 (685 aa).

Disordered stretches follow at residues 25-66 (NLPG…ENSY) and 108-129 (LQQQ…SQRL). Residues 39–56 (QHLPQQQQRQLLEQQAGQ) are compositionally biased toward low complexity. Residues 176–423 (PAENCITYWR…EHKVGPLEGL (248 aa)) are dimerization. Positions 185–199 (RKFVAEYFSPRAKQR) match the Nuclear localization signal motif. The segment covering 447-459 (GNSGAMSGPAQAQ) has biased composition (polar residues). Disordered regions lie at residues 447–491 (GNSG…MNGS), 512–591 (NNQN…NTQE), and 611–658 (QQQA…NNLP). Over residues 460-471 (MTLSSGTMSGST) the composition is skewed to low complexity. Over residues 512 to 524 (NNQNSNTGNQEGF) the composition is skewed to polar residues. Residues 525 to 543 (SSQNPTLNSNQSPSSSSQQ) show a composition bias toward low complexity. 3 stretches are compositionally biased toward polar residues: residues 544–588 (RENL…SHGN), 611–636 (QQQA…TSNI), and 645–658 (RINS…NNLP).

Belongs to the adn1/SEU family.

Its subcellular location is the nucleus. In terms of biological role, probable transcription regulator that functions in the development of the carpel margin meristem similarly to SEUSS (SEU). In association with SEU, supports organ development from meristematic regions by facilitating auxin response and thus organ initiation, and by sustaining meristematic potential through the maintenance of PHABULOSA expression. The protein is Probable transcriptional regulator SLK3 (SLK3) of Arabidopsis thaliana (Mouse-ear cress).